The sequence spans 32 residues: Ferredoxin (32 aa).

The 2Fe-2S ferredoxin-type domain maps to 3–32; the sequence is YKVRLLSEAEGIDVTIDCADDVYILDAAEE.

This sequence belongs to the 2Fe2S plant-type ferredoxin family. It depends on [2Fe-2S] cluster as a cofactor.

It is found in the plastid. The protein resides in the chloroplast. Ferredoxins are iron-sulfur proteins that transfer electrons in a wide variety of metabolic reactions. The sequence is that of Ferredoxin from Porphyridium purpureum (Red alga).